The chain runs to 236 residues: MRQHVNPLSRSFQLPLRLPPPSELFTHPEHPIHLDIGCARGRCILDLADRHPNWNHIGVEIRRPLVIPADREALESPHGNVRVLFCNANISLEGWMETLPKDRLQRVSIQFPDPWFKRRHRKRRVLQPRLLMAIASALQPGKDFFIQSDVREVIDPMVALTELSGCFDRPENDAHPWRRTNPLTVPTERERYVMDQQLPVYRVLFRRNHTHQPPIEEFEQHWQEIDNPGNAPTPDA.

The S-adenosyl-L-methionine site is built by Asp35, Glu60, Asn87, and Asp113. Residue Asp113 is part of the active site. Substrate-binding residues include Lys117 and Asp149. The disordered stretch occupies residues Glu217–Ala236.

This sequence belongs to the class I-like SAM-binding methyltransferase superfamily. TrmB family.

The enzyme catalyses guanosine(46) in tRNA + S-adenosyl-L-methionine = N(7)-methylguanosine(46) in tRNA + S-adenosyl-L-homocysteine. The protein operates within tRNA modification; N(7)-methylguanine-tRNA biosynthesis. Its function is as follows. Catalyzes the formation of N(7)-methylguanine at position 46 (m7G46) in tRNA. This chain is tRNA (guanine-N(7)-)-methyltransferase, found in Synechococcus sp. (strain CC9902).